Here is a 609-residue protein sequence, read N- to C-terminus: Acetyl-coenzyme A carboxylase carboxyl transferase subunits beta/alpha (609 aa).

Residues 1 to 271 (MTLEATAIEA…QTAEFLLTHG (271 aa)) are acetyl-coenzyme A carboxylase carboxyl transferase subunit beta. Positions 39–308 (SWLLCGGCGT…GIPRQAGRPD (270 aa)) constitute a CoA carboxyltransferase N-terminal domain. A carboxyltransferase region spans residues 39-559 (SWLLCGGCGT…REALRGALAD (521 aa)). Positions 43, 46, 62, and 65 each coordinate Zn(2+). The segment at 43–65 (CGGCGTMLYERRFAREGRVCADC) adopts a C4-type zinc-finger fold. Residues 272 to 582 (VVDLISPRRE…RARFRQFGVA (311 aa)) are acetyl-coenzyme A carboxylase carboxyl transferase subunit alpha. The CoA carboxyltransferase C-terminal domain occupies 314 to 559 (DPEQLARRDA…REALRGALAD (246 aa)). Positions 582–592 (ATPAPATAPAA) are enriched in low complexity. Residues 582-609 (ATPAPATAPAASDDAHESQTDRSVEATR) form a disordered region. Basic and acidic residues predominate over residues 594-609 (DDAHESQTDRSVEATR).

This sequence in the N-terminal section; belongs to the AccD/PCCB family. In the C-terminal section; belongs to the AccA family. In terms of assembly, acetyl-CoA carboxylase is a heterotetramer composed of biotin carboxyl carrier protein (AccB), biotin carboxylase (AccC) and two subunits of ACCase subunit beta/alpha. Requires Zn(2+) as cofactor.

Its subcellular location is the cytoplasm. The catalysed reaction is N(6)-carboxybiotinyl-L-lysyl-[protein] + acetyl-CoA = N(6)-biotinyl-L-lysyl-[protein] + malonyl-CoA. The protein operates within lipid metabolism; malonyl-CoA biosynthesis; malonyl-CoA from acetyl-CoA: step 1/1. Functionally, component of the acetyl coenzyme A carboxylase (ACC) complex. Biotin carboxylase (BC) catalyzes the carboxylation of biotin on its carrier protein (BCCP) and then the CO(2) group is transferred by the transcarboxylase to acetyl-CoA to form malonyl-CoA. The polypeptide is Acetyl-coenzyme A carboxylase carboxyl transferase subunits beta/alpha (accD) (Frankia alni (strain DSM 45986 / CECT 9034 / ACN14a)).